A 328-amino-acid polypeptide reads, in one-letter code: Gonadotropin-releasing hormone receptor (328 aa).

Residues 1–38 (MANGDSPDQNENHCSAINSSILLTPGSLPTLTLSGKIR) are Extracellular-facing. A glycan (N-linked (GlcNAc...) asparagine) is linked at Asn-18. The helical transmembrane segment at 39–58 (VTVTFFLFLLSTIFNTSFLL) threads the bilayer. Over 59–77 (KLQNWTQRKEKRKKLSKMK) the chain is Cytoplasmic. A helical transmembrane segment spans residues 78–97 (VLLKHLTLANLLETLIVMPL). Over 98–115 (DGMWNITVQWYAGELLCK) the chain is Extracellular. N-linked (GlcNAc...) asparagine glycosylation is present at Asn-102. A disulfide bridge links Cys-114 with Cys-196. The chain crosses the membrane as a helical span at residues 116–137 (VLSYLKLFSMYAPAFMMVVISL). Topologically, residues 138-164 (DRSLAITRPLAVKSNSKLGQFMIGLAW) are cytoplasmic. The helical transmembrane segment at 165–184 (LLSSIFAGPQLYIFGMIHLA) threads the bilayer. The Extracellular portion of the chain corresponds to 185 to 212 (DDSGQTEGFSQCVTHCSFPQWWHQAFYN). Residues 213-232 (FFTFSCLFIIPLLIMLICNA) form a helical membrane-spanning segment. The Cytoplasmic segment spans residues 233–281 (KIIFTLTRVLHQDPHKLQLNQSKNNIPQARLRTLKMTVAFATSFTVCWT). A helical transmembrane segment spans residues 282 to 300 (PYYVLGIWYWFDPDMVNRV). At 301–306 (SDPVNH) the chain is on the extracellular side. The helical transmembrane segment at 307–326 (FFFLFAFLNPCFDPLIYGYF) threads the bilayer. The Cytoplasmic portion of the chain corresponds to 327-328 (SL).

The protein belongs to the G-protein coupled receptor 1 family.

The protein localises to the cell membrane. In terms of biological role, receptor for gonadotropin releasing hormone (GnRH) that mediates the action of GnRH to stimulate the secretion of the gonadotropic hormones luteinizing hormone (LH) and follicle-stimulating hormone (FSH). This receptor mediates its action by association with G-proteins that activate a phosphatidylinositol-calcium second messenger system. This Ovis aries (Sheep) protein is Gonadotropin-releasing hormone receptor (GNRHR).